A 309-amino-acid chain; its full sequence is Porphobilinogen deaminase (309 aa).

At cysteine 241 the chain carries S-(dipyrrolylmethanemethyl)cysteine.

It belongs to the HMBS family. Monomer. It depends on dipyrromethane as a cofactor.

The enzyme catalyses 4 porphobilinogen + H2O = hydroxymethylbilane + 4 NH4(+). Its pathway is porphyrin-containing compound metabolism; protoporphyrin-IX biosynthesis; coproporphyrinogen-III from 5-aminolevulinate: step 2/4. In terms of biological role, tetrapolymerization of the monopyrrole PBG into the hydroxymethylbilane pre-uroporphyrinogen in several discrete steps. The protein is Porphobilinogen deaminase of Geobacillus kaustophilus (strain HTA426).